The following is a 660-amino-acid chain: DNA mismatch repair protein MutL (660 aa).

Disordered regions lie at residues 368–426 (PQQT…PTKK) and 439–461 (NREQ…STQQ). Positions 406–417 (SSSSNSTAPSRS) are enriched in low complexity.

It belongs to the DNA mismatch repair MutL/HexB family.

Functionally, this protein is involved in the repair of mismatches in DNA. It is required for dam-dependent methyl-directed DNA mismatch repair. May act as a 'molecular matchmaker', a protein that promotes the formation of a stable complex between two or more DNA-binding proteins in an ATP-dependent manner without itself being part of a final effector complex. The sequence is that of DNA mismatch repair protein MutL from Aliivibrio fischeri (strain ATCC 700601 / ES114) (Vibrio fischeri).